The primary structure comprises 157 residues: 6,7-dimethyl-8-ribityllumazine synthase (157 aa).

Residues phenylalanine 24, 58–60, and 82–84 each bind 5-amino-6-(D-ribitylamino)uracil; these read SFE and AVI. Position 87-88 (87-88) interacts with (2S)-2-hydroxy-3-oxobutyl phosphate; it reads ET. Histidine 90 acts as the Proton donor in catalysis. Phenylalanine 115 contributes to the 5-amino-6-(D-ribitylamino)uracil binding site. Position 129 (arginine 129) interacts with (2S)-2-hydroxy-3-oxobutyl phosphate.

The protein belongs to the DMRL synthase family.

The enzyme catalyses (2S)-2-hydroxy-3-oxobutyl phosphate + 5-amino-6-(D-ribitylamino)uracil = 6,7-dimethyl-8-(1-D-ribityl)lumazine + phosphate + 2 H2O + H(+). The protein operates within cofactor biosynthesis; riboflavin biosynthesis; riboflavin from 2-hydroxy-3-oxobutyl phosphate and 5-amino-6-(D-ribitylamino)uracil: step 1/2. Functionally, catalyzes the formation of 6,7-dimethyl-8-ribityllumazine by condensation of 5-amino-6-(D-ribitylamino)uracil with 3,4-dihydroxy-2-butanone 4-phosphate. This is the penultimate step in the biosynthesis of riboflavin. This Thermus thermophilus (strain ATCC BAA-163 / DSM 7039 / HB27) protein is 6,7-dimethyl-8-ribityllumazine synthase.